Here is a 347-residue protein sequence, read N- to C-terminus: Protein-glutamate methylesterase/protein-glutamine glutaminase 2 (347 aa).

Residues 2 to 119 (RVMIVDDSAV…LGGADLYRKD (118 aa)) enclose the Response regulatory domain. Residue D52 is modified to 4-aspartylphosphate. Residues 131–153 (AARPAPPQAAPRPTLAPPSSDPA) form a disordered region. Over residues 134–150 (PAPPQAAPRPTLAPPSS) the composition is skewed to pro residues. Positions 152–346 (PAGPIEAVVV…PYIASRARSV (195 aa)) constitute a CheB-type methylesterase domain. Catalysis depends on residues S164, H191, and D288.

This sequence belongs to the CheB family. Phosphorylated by CheA. Phosphorylation of the N-terminal regulatory domain activates the methylesterase activity.

It is found in the cytoplasm. The enzyme catalyses [protein]-L-glutamate 5-O-methyl ester + H2O = L-glutamyl-[protein] + methanol + H(+). The catalysed reaction is L-glutaminyl-[protein] + H2O = L-glutamyl-[protein] + NH4(+). Involved in chemotaxis. Part of a chemotaxis signal transduction system that modulates chemotaxis in response to various stimuli. Catalyzes the demethylation of specific methylglutamate residues introduced into the chemoreceptors (methyl-accepting chemotaxis proteins or MCP) by CheR. Also mediates the irreversible deamidation of specific glutamine residues to glutamic acid. The chain is Protein-glutamate methylesterase/protein-glutamine glutaminase 2 from Caulobacter vibrioides (strain ATCC 19089 / CIP 103742 / CB 15) (Caulobacter crescentus).